A 122-amino-acid chain; its full sequence is MIQMQSRLDVADNTGAKSVMCIKVLGGSKRRYAGIGDVIKVSIKEAAPRGRVKKGEVYSAVVVRTAKGVRRQDGSLVKFDGNAAVLLNAKLEPIGTRIFGPVTRELRTERFMKIVSLAPEVL.

It belongs to the universal ribosomal protein uL14 family. In terms of assembly, part of the 50S ribosomal subunit. Forms a cluster with proteins L3 and L19. In the 70S ribosome, L14 and L19 interact and together make contacts with the 16S rRNA in bridges B5 and B8.

Binds to 23S rRNA. Forms part of two intersubunit bridges in the 70S ribosome. The chain is Large ribosomal subunit protein uL14 from Methylibium petroleiphilum (strain ATCC BAA-1232 / LMG 22953 / PM1).